The sequence spans 117 residues: Large ribosomal subunit protein uL18 (117 aa).

It belongs to the universal ribosomal protein uL18 family. In terms of assembly, part of the 50S ribosomal subunit; part of the 5S rRNA/L5/L18/L25 subcomplex. Contacts the 5S and 23S rRNAs.

Functionally, this is one of the proteins that bind and probably mediate the attachment of the 5S RNA into the large ribosomal subunit, where it forms part of the central protuberance. The chain is Large ribosomal subunit protein uL18 from Laribacter hongkongensis (strain HLHK9).